The sequence spans 217 residues: Ras-related protein RIC2 (217 aa).

GTP contacts are provided by residues 21-28 (GDSGVGKS), 69-73 (DTAGQ), and 127-130 (NKSD). 2 S-geranylgeranyl cysteine lipidation sites follow: Cys214 and Cys215.

It belongs to the small GTPase superfamily. Rab family.

The protein localises to the cell membrane. Possesses GTPase activity. In Oryza sativa subsp. japonica (Rice), this protein is Ras-related protein RIC2 (RIC2).